A 94-amino-acid chain; its full sequence is Co-chaperonin GroES (94 aa).

The protein belongs to the GroES chaperonin family. Heptamer of 7 subunits arranged in a ring. Interacts with the chaperonin GroEL.

It localises to the cytoplasm. In terms of biological role, together with the chaperonin GroEL, plays an essential role in assisting protein folding. The GroEL-GroES system forms a nano-cage that allows encapsulation of the non-native substrate proteins and provides a physical environment optimized to promote and accelerate protein folding. GroES binds to the apical surface of the GroEL ring, thereby capping the opening of the GroEL channel. This Streptococcus agalactiae protein is Co-chaperonin GroES.